The following is a 314-amino-acid chain: Olfactory receptor 5G9 (314 aa).

The Extracellular segment spans residues 1–25 (MADENYTRITEFIFIGLRYHPNLQV). N-linked (GlcNAc...) asparagine glycosylation is present at asparagine 5. The helical transmembrane segment at 26–46 (FLFLLFLLFYLVTMTGNLGMI) threads the bilayer. Residues 47–54 (ILIRVDSR) lie on the Cytoplasmic side of the membrane. A helical membrane pass occupies residues 55–75 (LHTPMYFFLSHLSFVDICFSS). The Extracellular portion of the chain corresponds to 76–99 (VVAPKMLTDFFADKKAISFLGCVL). An intrachain disulfide couples cysteine 97 to cysteine 189. The helical transmembrane segment at 100–120 (QQWFFGFFVAIECLLLASMAY) threads the bilayer. Residues 121-133 (DRYVAICNPLLYS) are Cytoplasmic-facing. A helical transmembrane segment spans residues 134–154 (VAMSQRLCIQLVIGPYAVGFF). Residues 155 to 196 (NTMTHTTAAFRLPFCGSNIINHFFCDMSPILSLICADIRINK) are Extracellular-facing. A helical transmembrane segment spans residues 197–217 (LLVFIVAGAVLIVSSTTIIVS). Topologically, residues 218–237 (YFHILIAILRIRSAEGRRKA) are cytoplasmic. Residues 238–258 (FSTCSSHVTAVSILYGTLFFI) traverse the membrane as a helical segment. Residues 259–271 (YVRPSAISSLDLN) are Extracellular-facing. Residues 272–292 (KVVSVFYTAVIPMLNPLIYSL) traverse the membrane as a helical segment. The Cytoplasmic portion of the chain corresponds to 293-314 (RNKEVKSAMGRTVAKAKVFLKN).

It belongs to the G-protein coupled receptor 1 family.

It is found in the cell membrane. Functionally, potential odorant receptor. This chain is Olfactory receptor 5G9, found in Mus musculus (Mouse).